Here is a 238-residue protein sequence, read N- to C-terminus: tRNA (guanine-N(1)-)-methyltransferase (238 aa).

S-adenosyl-L-methionine-binding positions include glycine 109 and 129 to 134 (IGDFVL).

This sequence belongs to the RNA methyltransferase TrmD family. In terms of assembly, homodimer.

The protein localises to the cytoplasm. It carries out the reaction guanosine(37) in tRNA + S-adenosyl-L-methionine = N(1)-methylguanosine(37) in tRNA + S-adenosyl-L-homocysteine + H(+). Specifically methylates guanosine-37 in various tRNAs. The sequence is that of tRNA (guanine-N(1)-)-methyltransferase from Exiguobacterium sp. (strain ATCC BAA-1283 / AT1b).